Reading from the N-terminus, the 119-residue chain is Large ribosomal subunit protein bL20 (119 aa).

Belongs to the bacterial ribosomal protein bL20 family.

Binds directly to 23S ribosomal RNA and is necessary for the in vitro assembly process of the 50S ribosomal subunit. It is not involved in the protein synthesizing functions of that subunit. The protein is Large ribosomal subunit protein bL20 of Acinetobacter baumannii (strain SDF).